The chain runs to 541 residues: ATP synthase subunit beta (541 aa).

The tract at residues 1–65 (MAKAVTSSKG…TPVKKEERAK (65 aa)) is disordered. Basic and acidic residues-rich tracts occupy residues 25–36 (VKKDASKSKDAS) and 52–65 (AAKD…ERAK). 214–221 (GGAGVGKT) serves as a coordination point for ATP.

This sequence belongs to the ATPase alpha/beta chains family. As to quaternary structure, F-type ATPases have 2 components, CF(1) - the catalytic core - and CF(0) - the membrane proton channel. CF(1) has five subunits: alpha(3), beta(3), gamma(1), delta(1), epsilon(1). CF(0) has three main subunits: a(1), b(2) and c(9-12). The alpha and beta chains form an alternating ring which encloses part of the gamma chain. CF(1) is attached to CF(0) by a central stalk formed by the gamma and epsilon chains, while a peripheral stalk is formed by the delta and b chains.

Its subcellular location is the cell inner membrane. The enzyme catalyses ATP + H2O + 4 H(+)(in) = ADP + phosphate + 5 H(+)(out). Produces ATP from ADP in the presence of a proton gradient across the membrane. The catalytic sites are hosted primarily by the beta subunits. The chain is ATP synthase subunit beta from Bartonella tribocorum (strain CIP 105476 / IBS 506).